We begin with the raw amino-acid sequence, 314 residues long: MTQITRDFRGQWMQQEPMSRHTTWKIGGPADLFAIPADEADLAGLIRRCREKGIPWMVVGNGSNLLVADKGIRGVVIHLGRAFSDRRLDDRRLTAGGGCALSGLARFAVRAGLQGLEFACGIPASLGGAVAMNAGAHGGAMENIVRWVDVIDDEGRIRRYRGEEMDFAYRHSRLQREKAIVVRVGMELRWGDREALERWMEEKLALRRKSQPLEFPNAGSVFLNPPGSLSAGQLIEEAGMKGFAIGGAQVSERHANFIVNRGGATAADVLALIDAVRARVLATCGIELQSEVRVIGDSGGQVDGGGTEDSHQRG.

An FAD-binding PCMH-type domain is found at 25–191; that stretch reads KIGGPADLFA…VRVGMELRWG (167 aa). Residue arginine 170 is part of the active site. Serine 220 serves as the catalytic Proton donor. Glutamate 291 is a catalytic residue.

The protein belongs to the MurB family. FAD serves as cofactor.

The protein localises to the cytoplasm. It catalyses the reaction UDP-N-acetyl-alpha-D-muramate + NADP(+) = UDP-N-acetyl-3-O-(1-carboxyvinyl)-alpha-D-glucosamine + NADPH + H(+). The protein operates within cell wall biogenesis; peptidoglycan biosynthesis. Functionally, cell wall formation. The sequence is that of UDP-N-acetylenolpyruvoylglucosamine reductase from Heliobacterium modesticaldum (strain ATCC 51547 / Ice1).